We begin with the raw amino-acid sequence, 493 residues long: Lysine--tRNA ligase (493 aa).

Glutamate 402 and glutamate 409 together coordinate Mg(2+).

The protein belongs to the class-II aminoacyl-tRNA synthetase family. As to quaternary structure, homodimer. It depends on Mg(2+) as a cofactor.

Its subcellular location is the cytoplasm. It carries out the reaction tRNA(Lys) + L-lysine + ATP = L-lysyl-tRNA(Lys) + AMP + diphosphate. The protein is Lysine--tRNA ligase of Fusobacterium nucleatum subsp. nucleatum (strain ATCC 25586 / DSM 15643 / BCRC 10681 / CIP 101130 / JCM 8532 / KCTC 2640 / LMG 13131 / VPI 4355).